Reading from the N-terminus, the 44-residue chain is Small ribosomal subunit protein eS31 (44 aa).

Residues Cys18, Cys21, Cys35, and Cys38 each coordinate Zn(2+). Residues 18-38 (CPRCGDTVLAEHEDRQHCGKC) form a C4-type zinc finger.

It belongs to the eukaryotic ribosomal protein eS31 family. Part of the 30S ribosomal subunit. Requires Zn(2+) as cofactor.

This chain is Small ribosomal subunit protein eS31, found in Haloarcula marismortui (strain ATCC 43049 / DSM 3752 / JCM 8966 / VKM B-1809) (Halobacterium marismortui).